Here is a 242-residue protein sequence, read N- to C-terminus: 1-(5-phosphoribosyl)-5-[(5-phosphoribosylamino)methylideneamino] imidazole-4-carboxamide isomerase (242 aa).

Asp10 (proton acceptor) is an active-site residue. Asp132 (proton donor) is an active-site residue.

This sequence belongs to the HisA/HisF family.

The protein localises to the cytoplasm. It catalyses the reaction 1-(5-phospho-beta-D-ribosyl)-5-[(5-phospho-beta-D-ribosylamino)methylideneamino]imidazole-4-carboxamide = 5-[(5-phospho-1-deoxy-D-ribulos-1-ylimino)methylamino]-1-(5-phospho-beta-D-ribosyl)imidazole-4-carboxamide. It participates in amino-acid biosynthesis; L-histidine biosynthesis; L-histidine from 5-phospho-alpha-D-ribose 1-diphosphate: step 4/9. In Methanopyrus kandleri (strain AV19 / DSM 6324 / JCM 9639 / NBRC 100938), this protein is 1-(5-phosphoribosyl)-5-[(5-phosphoribosylamino)methylideneamino] imidazole-4-carboxamide isomerase.